Reading from the N-terminus, the 361-residue chain is MYIKAIMLANYRNYNNLELNLSEGVNVFIGDNAQGKTNVLESIYYCAFAKSHRTSRDKDLINWKENEAYISLLVGKKRLDKRIDIKILRDGKKAIKVNSIKINKIGELFGTFNVVMFSPEDLKIIKESPGIRRKFLDMELCQISKKYYFNLVQYNKILNERNVILRSRDFNKDILEVYDLQLVECADYIVKERLEYIDKINYYGKFIHNEITSGKEDIVFKYDSGIKFKDNFKYAFLEKLRNNLLRDREQGITSVGPHRDDFNVLINNIDVKKFGSQGQQRTAVLTMKFSSLKIIKEITKEYPILLLDDVLSELDINRKRYVLSTLSDIQTIITCTGINDLEDYLDDKSKVFNVCNGEIVN.

An ATP-binding site is contributed by 30-37 (GDNAQGKT).

The protein belongs to the RecF family.

It is found in the cytoplasm. Its function is as follows. The RecF protein is involved in DNA metabolism; it is required for DNA replication and normal SOS inducibility. RecF binds preferentially to single-stranded, linear DNA. It also seems to bind ATP. This is DNA replication and repair protein RecF from Clostridium botulinum (strain Alaska E43 / Type E3).